Consider the following 564-residue polypeptide: Oxalyl-CoA decarboxylase (564 aa).

2 residues coordinate substrate: Ile-32 and Tyr-118. Arg-158 and Lys-220 together coordinate ADP. 261-265 (AAARS) contributes to the substrate binding site. Arg-280, Asp-302, and Ile-322 together coordinate ADP. Asn-355 serves as a coordination point for substrate. Thiamine diphosphate-binding positions include Tyr-372 and 396 to 398 (ANT). 403-404 (RN) provides a ligand contact to substrate. Thiamine diphosphate is bound at residue 421–423 (GVM). Residue Asp-447 participates in Mg(2+) binding. 448-449 (SA) contacts thiamine diphosphate. The Mg(2+) site is built by Asn-474 and Gly-476. Tyr-478 lines the thiamine diphosphate pocket. 550–552 (SGH) contributes to the substrate binding site.

This sequence belongs to the TPP enzyme family. In terms of assembly, homotetramer; dimer of dimers. The cofactor is Mg(2+). Thiamine diphosphate is required as a cofactor.

It catalyses the reaction oxalyl-CoA + H(+) = formyl-CoA + CO2. It participates in metabolic intermediate degradation; oxalate degradation; CO(2) and formate from oxalate: step 2/2. Involved in the catabolism of oxalate and in the adapatation to low pH via the induction of the oxalate-dependent acid tolerance response (ATR). Catalyzes the decarboxylation of oxalyl-CoA to yield carbon dioxide and formyl-CoA. The chain is Oxalyl-CoA decarboxylase (oxc) from Escherichia coli O157:H7.